Reading from the N-terminus, the 141-residue chain is Endoribonuclease YbeY (141 aa).

Zn(2+) is bound by residues His-100, His-104, and His-110.

The protein belongs to the endoribonuclease YbeY family. It depends on Zn(2+) as a cofactor.

The protein localises to the cytoplasm. Its function is as follows. Single strand-specific metallo-endoribonuclease involved in late-stage 70S ribosome quality control and in maturation of the 3' terminus of the 16S rRNA. The protein is Endoribonuclease YbeY of Helicobacter pylori (strain J99 / ATCC 700824) (Campylobacter pylori J99).